Here is a 457-residue protein sequence, read N- to C-terminus: Siroheme synthase (457 aa).

The tract at residues 1–204 is precorrin-2 dehydrogenase /sirohydrochlorin ferrochelatase; sequence MDHLPIFCQL…NDQKAITETT (204 aa). NAD(+) contacts are provided by residues 22–23 and 43–44; these read DV and LA. At Ser128 the chain carries Phosphoserine. The tract at residues 216–457 is uroporphyrinogen-III C-methyltransferase; the sequence is GEVVLVGAGP…RDKLNWFSNH (242 aa). S-adenosyl-L-methionine is bound at residue Pro225. Asp248 serves as the catalytic Proton acceptor. Lys270 acts as the Proton donor in catalysis. Residues 301-303, Ile306, 331-332, Met382, and Gly411 contribute to the S-adenosyl-L-methionine site; these read GGD and TA.

It in the N-terminal section; belongs to the precorrin-2 dehydrogenase / sirohydrochlorin ferrochelatase family. The protein in the C-terminal section; belongs to the precorrin methyltransferase family.

It catalyses the reaction uroporphyrinogen III + 2 S-adenosyl-L-methionine = precorrin-2 + 2 S-adenosyl-L-homocysteine + H(+). The enzyme catalyses precorrin-2 + NAD(+) = sirohydrochlorin + NADH + 2 H(+). The catalysed reaction is siroheme + 2 H(+) = sirohydrochlorin + Fe(2+). It participates in cofactor biosynthesis; adenosylcobalamin biosynthesis; precorrin-2 from uroporphyrinogen III: step 1/1. It functions in the pathway cofactor biosynthesis; adenosylcobalamin biosynthesis; sirohydrochlorin from precorrin-2: step 1/1. The protein operates within porphyrin-containing compound metabolism; siroheme biosynthesis; precorrin-2 from uroporphyrinogen III: step 1/1. Its pathway is porphyrin-containing compound metabolism; siroheme biosynthesis; siroheme from sirohydrochlorin: step 1/1. It participates in porphyrin-containing compound metabolism; siroheme biosynthesis; sirohydrochlorin from precorrin-2: step 1/1. Multifunctional enzyme that catalyzes the SAM-dependent methylations of uroporphyrinogen III at position C-2 and C-7 to form precorrin-2 via precorrin-1. Then it catalyzes the NAD-dependent ring dehydrogenation of precorrin-2 to yield sirohydrochlorin. Finally, it catalyzes the ferrochelation of sirohydrochlorin to yield siroheme. This is Siroheme synthase from Shigella boydii serotype 18 (strain CDC 3083-94 / BS512).